Consider the following 196-residue polypeptide: Heat shock protein beta-8 (196 aa).

The tract at residues 1 to 28 is disordered; that stretch reads MADGQLPFPCSYPSRLRRDPFRDSPLSS. Phosphoserine is present on residues S24 and S57. T63 is modified (phosphothreonine). Asymmetric dimethylarginine is present on residues R71 and R78. Residues 74–185 enclose the sHSP domain; sequence TATARFGVPA…PFGESSFNNE (112 aa). The interval 176-196 is disordered; it reads PFGESSFNNELPQDNQEVTCS. Over residues 178 to 196 the composition is skewed to polar residues; it reads GESSFNNELPQDNQEVTCS.

It belongs to the small heat shock protein (HSP20) family. Monomer. Forms a ternary complex with BAG3 and HSPA1A. Component of the chaperone-assisted selective autophagy (CASA) complex consisting of BAG3, HSPA8/HSC70, HSPB8 and STUB1/CHIP. Interacts with HSPB1. Interacts with DNAJB6. Interacts with BAG3. Phosphorylated.

It localises to the cytoplasm. It is found in the nucleus. Involved in the chaperone-assisted selective autophagy (CASA), a crucial process for protein quality control, particularly in mechanical strained cells and tissues such as muscle. Displays temperature-dependent chaperone activity. This Rattus norvegicus (Rat) protein is Heat shock protein beta-8 (Hspb8).